The primary structure comprises 1197 residues: PAN2-PAN3 deadenylation complex catalytic subunit PAN2 (1197 aa).

WD repeat units lie at residues 153–193 (DEAE…QKYT), 195–231 (EVPG…VEHE), 244–280 (VHGN…ATTP), and 328–367 (TVGP…TFNT). The segment at 368 to 485 (YSRETDFALP…IGREEEPHLY (118 aa)) is linker. Residues 486–919 (MVAKKYRKVT…VPAILYYARR (434 aa)) form the USP domain. The region spanning 970–1142 (VGLDAEFVTL…EDARTALQLY (173 aa)) is the Exonuclease domain. Residues aspartate 973, glutamate 975, aspartate 1082, and aspartate 1134 each contribute to the a divalent metal cation site. The tract at residues 1176–1197 (VPEPDSQSSPKHGAVFPPVLAL) is disordered.

Belongs to the peptidase C19 family. PAN2 subfamily. In terms of assembly, forms a heterotrimer with an asymmetric homodimer of the regulatory subunit PAN3 to form the poly(A)-nuclease (PAN) deadenylation complex. It depends on a divalent metal cation as a cofactor.

It localises to the cytoplasm. It is found in the P-body. Its subcellular location is the nucleus. It catalyses the reaction Exonucleolytic cleavage of poly(A) to 5'-AMP.. With respect to regulation, positively regulated by the regulatory subunit PAN3. In terms of biological role, catalytic subunit of the poly(A)-nuclease (PAN) deadenylation complex, one of two cytoplasmic mRNA deadenylases involved in general and miRNA-mediated mRNA turnover. PAN specifically shortens poly(A) tails of RNA and the activity is stimulated by poly(A)-binding protein (PABP). PAN deadenylation is followed by rapid degradation of the shortened mRNA tails by the CCR4-NOT complex. Deadenylated mRNAs are then degraded by two alternative mechanisms, namely exosome-mediated 3'-5' exonucleolytic degradation, or deadenylation-dependent mRNA decaping and subsequent 5'-3' exonucleolytic degradation by XRN1. The sequence is that of PAN2-PAN3 deadenylation complex catalytic subunit PAN2 from Gallus gallus (Chicken).